The following is a 119-amino-acid chain: uncharacterized protein (119 aa).

The interval 86–119 is disordered; it reads KKQRMKMLTEQEEEEEEEEEEPPKPKKKVINRKK. Residues 95-106 show a composition bias toward acidic residues; the sequence is EQEEEEEEEEEE. The span at 110–119 shows a compositional bias: basic residues; the sequence is PKKKVINRKK.

This is an uncharacterized protein from Sputnik virophage.